The primary structure comprises 1034 residues: Potassium-transporting ATPase alpha chain 1 (1034 aa).

The Cytoplasmic portion of the chain corresponds to 2 to 97; the sequence is GKAENYELYQ…NALRPPRGTP (96 aa). Residues Y7 and Y10 each carry the phosphotyrosine modification. The disordered stretch occupies residues 13-40; that stretch reads ELGPGPSGDMAAKMSKKKAGRGGGKRKE. The span at 26 to 39 shows a compositional bias: basic residues; the sequence is MSKKKAGRGGGKRK. At S27 the chain carries Phosphoserine; by PKA and PKC. A helical membrane pass occupies residues 98 to 118; the sequence is EYVKFARQLAGGLQCLMWVAA. Residues 119 to 141 are Lumenal-facing; sequence AICLIAFAIQASEGDLTTDDNLY. A helical transmembrane segment spans residues 142-162; that stretch reads LALALIAVVVVTGCFGYYQEF. Over 163-298 the chain is Cytoplasmic; sequence KSTNIIASFK…NEKTPIAIEI (136 aa). The disordered stretch occupies residues 222–244; that stretch reads KVDNSSLTGESEPQTRSPECTHE. The segment covering 225–239 has biased composition (polar residues); it reads NSSLTGESEPQTRSP. The chain crosses the membrane as a helical span at residues 299–318; it reads EHFVDIIAGLAILFGATFFI. The Lumenal segment spans residues 319-330; sequence VAMCIGYTFLRA. The chain crosses the membrane as a helical span at residues 331–348; that stretch reads MVFFMAIVVAYVPEGLLA. Residues V339, A340, V342, and E344 each contribute to the K(+) site. Residues 349–782 lie on the Cytoplasmic side of the membrane; the sequence is TVTVCLSLTA…EQGRLIFDNL (434 aa). D386 functions as the 4-aspartylphosphate intermediate in the catalytic mechanism. Mg(2+) is bound by residues D386 and T388. S462 and S600 each carry phosphoserine. Mg(2+)-binding residues include D727 and D731. Residues 783-802 form a helical membrane-spanning segment; it reads KKSIAYTLTKNIPELTPYLI. E796 serves as a coordination point for K(+). Residues 803–812 are Lumenal-facing; it reads YITVSVPLPL. The chain crosses the membrane as a helical span at residues 813-833; the sequence is GCITILFIELCTDIFPSVSLA. Residue E821 coordinates K(+). At 834–853 the chain is on the cytoplasmic side; that stretch reads YEKAESDIMHLRPRNPKRDR. S839 carries the post-translational modification Phosphoserine. A helical membrane pass occupies residues 854–876; it reads LVNEPLAAYSYFQIGAIQSFAGF. Over 877–928 the chain is Lumenal; the sequence is TDYFTAMAQEGWFPLLCVGLRPQWENHHLQDLQDSYGQEWTFGQRLYQQYTC. The helical transmembrane segment at 929–948 threads the bilayer; sequence YTVFFISIEMCQIADVLIRK. Residues 949-962 lie on the Cytoplasmic side of the membrane; that stretch reads TRRLSAFQQGFFRN. At S953 the chain carries Phosphoserine; by PKA. Residues 963-981 form a helical membrane-spanning segment; the sequence is RILVIAIVFQVCIGCFLCY. Over 982-996 the chain is Lumenal; that stretch reads CPGMPNIFNFMPIRF. The helical transmembrane segment at 997 to 1017 threads the bilayer; sequence QWWLVPMPFGLLIFVYDEIRK. The Cytoplasmic segment spans residues 1018–1034; that stretch reads LGVRCCPGSWWDQELYY.

This sequence belongs to the cation transport ATPase (P-type) (TC 3.A.3) family. Type IIC subfamily. The gastric H(+)/K(+) ATPase pump is composed of the catalytic alpha subunit ATP4A and the regulatory beta subunit ATP4B. Interacts (via the P-domain) with ATP4B (via N-terminus); this interaction stabilizes the lumenal-open E2 conformation state and prevents the reverse reaction of the transport cycle.

Its subcellular location is the apical cell membrane. The protein resides in the cell membrane. It carries out the reaction K(+)(out) + ATP + H2O + H(+)(in) = K(+)(in) + ADP + phosphate + 2 H(+)(out). Its activity is regulated as follows. Down-regulated by K(+)-competitive acid blockers (P-CABs) such as vonoprazan. In terms of biological role, the catalytic subunit of the gastric H(+)/K(+) ATPase pump which transports H(+) ions in exchange for K(+) ions across the apical membrane of parietal cells. Uses ATP as an energy source to pump H(+) ions to the gastric lumen while transporting K(+) ion from the lumen into the cell. Remarkably generates a million-fold proton gradient across the gastric parietal cell membrane, acidifying the gastric juice down to pH 1. Within a transport cycle, the transfer of a H(+) ion across the membrane is coupled to ATP hydrolysis and is associated with a transient phosphorylation that shifts the pump conformation from inward-facing (E1) to outward-facing state (E2). The release of the H(+) ion in the stomach lumen is followed by binding of K(+) ion converting the pump conformation back to the E1 state. This chain is Potassium-transporting ATPase alpha chain 1 (ATP4A), found in Sus scrofa (Pig).